The following is a 225-amino-acid chain: MRQRILVVDDDASLAEMLTIVLRGEGFDTAVIGDGTQALTAVRELRPDLVLLDLMLPGMNGIDVCRVLRADSGVPIVMLTAKTDTVDVVLGLESGADDYIMKPFKPKELVARVRARLRRNDDEPAEMLSIADVEIDVPAHKVTRNGEQISLTPLEFDLLVALARKPRQVFTRDVLLEQVWGYRHPADTRLVNVHVQRLRAKVEKDPENPTVVLTVRGVGYKAGPP.

The Response regulatory domain maps to arginine 4–leucine 117. Aspartate 53 carries the post-translational modification 4-aspartylphosphate. Positions alanine 125–proline 224 form a DNA-binding region, ompR/PhoB-type.

In terms of processing, phosphorylated by MtrB.

Member of the two-component regulatory system MtrA/MtrB. In Mycolicibacterium paratuberculosis (strain ATCC BAA-968 / K-10) (Mycobacterium paratuberculosis), this protein is DNA-binding response regulator MtrA (mtrA).